A 368-amino-acid polypeptide reads, in one-letter code: MNKTITALAIMMASFAANASVLPETPVPFKSGTGAIDNDTVYIGLGSAGTAWYKLDTQAKDKKWTALAAFPGGPRDQATSAFIDGNLYVFGGIGKNSKGLTQVFNDVHKYNPKTNSWVKLMSHAPMGMAGHVTFVHNGKAYVTGGVNQNIFNGYFEDLNEAGKDSATIDKINAHYFDKKAEDYFFNKFLLSFDPSTQQWSYAGESPWYGTAGAAVVNKGDKTWLINGEAKPGLRTDAVFELDFTGNNLKWNKLAPVSSPDGVAGGFAGISNDSLIFAGGAGFKGSRENYQNGKNYAHEGLKKSYSTDIHLWHNGKWDKSGELSQGRAYGVSLPWNNSLLIIGGETAGGKAVTDSVLISVKDNKVTVQN.

Positions 1 to 19 (MNKTITALAIMMASFAANA) are cleaved as a signal peptide. Kelch repeat units follow at residues 40–84 (TVYI…AFID), 86–137 (NLYV…FVHN), 139–173 (KAYV…KINA), 174–219 (HYFD…VNKG), 222–265 (TWLI…VAGG), 287–336 (ENYQ…PWNN), and 338–367 (LLII…VTVQ). The Proton acceptor role is filled by glutamate 228.

The protein belongs to the NanM family. In terms of assembly, homodimer.

The protein localises to the periplasm. It carries out the reaction N-acetyl-alpha-neuraminate = N-acetyl-beta-neuraminate. Its function is as follows. Converts alpha-N-acetylneuranimic acid (Neu5Ac) to the beta-anomer, accelerating the equilibrium between the alpha- and beta-anomers. Probably facilitates sialidase-negative bacteria to compete successfully for limited amounts of extracellular Neu5Ac, which is likely taken up in the beta-anomer. In addition, the rapid removal of sialic acid from solution might be advantageous to the bacterium to damp down host responses. In Escherichia coli O9:H4 (strain HS), this protein is N-acetylneuraminate epimerase.